Here is a 225-residue protein sequence, read N- to C-terminus: F-box protein SKIP27 (225 aa).

Residues 121-169 (KSRLECLPQDLLIRVICGVDHEDLKSLKLVSKSIREASLVAKTLHFAYT) enclose the F-box domain.

As to quaternary structure, part of a SCF (ASK-cullin-F-box) protein ligase complex. Interacts with SKP1A/ASK1 and SPK1B/ASK2.

The protein resides in the nucleus. Its pathway is protein modification; protein ubiquitination. Its function is as follows. Component of SCF(ASK-cullin-F-box) E3 ubiquitin ligase complexes, which may mediate the ubiquitination and subsequent proteasomal degradation of target proteins. The polypeptide is F-box protein SKIP27 (SKIP27) (Arabidopsis thaliana (Mouse-ear cress)).